The sequence spans 71 residues: Small ribosomal subunit protein bS21 (71 aa).

The segment at 40–71 (KPTQERKRKAAAAVKRNIRRTSRDVTKRKRLY) is disordered. A compositionally biased stretch (basic residues) spans 45–71 (RKRKAAAAVKRNIRRTSRDVTKRKRLY).

This sequence belongs to the bacterial ribosomal protein bS21 family.

The chain is Small ribosomal subunit protein bS21 from Xylella fastidiosa (strain M23).